Reading from the N-terminus, the 88-residue chain is Arminin 7965 (88 aa).

The first 18 residues, 1–18 (MKTVFAILFLTFIAFTYA), serve as a signal peptide directing secretion. The propeptide occupies 19-57 (KSYEDVKEEIKNEVEREIFEDLEEESDVLDSNVRELNDA). An Alanine amide modification is found at Ala-85.

Belongs to the arminin family. Expressed in entodermal epithelium along the body column.

It localises to the secreted. The protein resides in the target cell membrane. Its function is as follows. Antimicrobial peptide with a broad-spectrum antimicrobial activity. Keeps its antibacterial activity under a wide range of salt concentrations that mimic physiological conditions of human blood, which is surprising, since Hydra is an obligate freshwater animal with nearly no salt tolerance. Does not affect red blood cells. In Hydra vulgaris (Hydra), this protein is Arminin 7965.